The primary structure comprises 70 residues: Large ribosomal subunit protein uL29 (70 aa).

This sequence belongs to the universal ribosomal protein uL29 family.

This chain is Large ribosomal subunit protein uL29, found in Rickettsia bellii (strain OSU 85-389).